Reading from the N-terminus, the 183-residue chain is Peptidyl-prolyl cis-trans isomerase 11 (183 aa).

The PPIase cyclophilin-type domain occupies 20–182 (FLEVTAGGAP…LPIVVVQCGQ (163 aa)).

This sequence belongs to the cyclophilin-type PPIase family. PPIase H subfamily.

The catalysed reaction is [protein]-peptidylproline (omega=180) = [protein]-peptidylproline (omega=0). Its function is as follows. PPIases accelerate the folding of proteins. It catalyzes the cis-trans isomerization of proline imidic peptide bonds in oligopeptides. The protein is Peptidyl-prolyl cis-trans isomerase 11 (cyn-11) of Caenorhabditis elegans.